The following is a 170-amino-acid chain: Calcineurin subunit B type 1 (170 aa).

Gly-2 carries the N-myristoyl glycine lipid modification. EF-hand domains follow at residues 18 to 46 (DEIK…FMSL), 50 to 85 (QQNP…FSVK), 87 to 122 (DKEQ…MVGN), and 128 to 163 (QLQQ…LDIH). Residues Asp-31, Asp-33, Ser-35, Ser-37, Glu-42, Asp-63, Asp-65, Asn-67, Glu-69, Glu-74, Asp-100, Asp-102, Asp-104, Tyr-106, and Glu-111 each coordinate Ca(2+). Position 106 is a phosphotyrosine (Tyr-106). Positions 131 to 136 (QIVDKT) are calcineurin A binding. Asp-141, Asp-143, Asp-145, Arg-147, and Glu-152 together coordinate Ca(2+).

It belongs to the calcineurin regulatory subunit family. In terms of assembly, forms a complex composed of a calmodulin-dependent catalytic subunit (also known as calcineurin A) and a regulatory Ca(2+)-binding subunit (also known as calcineurin B). There are three catalytic subunits, each encoded by a separate gene (PPP3CA, PPP3CB, and PPP3CC) and two regulatory subunits which are also encoded by separate genes (PPP3R1 and PPP3R2). The interaction between the 2 subunits is Ca(2+)-independent. Interacts with catalytic subunit PPP3CA/calcineurin A. Interacts with catalytic subunit PPP3CB/calcineurin A. Interacts with CIB1 (via C-terminal region); the interaction increases upon cardiomyocyte hypertrophy. Interacts with RCAN1. Interacts with SPATA33 (via PQIIIT motif).

The protein localises to the cytoplasm. Its subcellular location is the cytosol. It is found in the cell membrane. It localises to the sarcolemma. Its function is as follows. Regulatory subunit of calcineurin, a calcium-dependent, calmodulin stimulated protein phosphatase. Confers calcium sensitivity. This Bos taurus (Bovine) protein is Calcineurin subunit B type 1 (PPP3R1).